The following is a 137-amino-acid chain: Chaperone protein YscB (137 aa).

Interacts with SycN to form a complex which specifically binds to YopN.

It is found in the cytoplasm. It localises to the cell inner membrane. Its function is as follows. Functions as a specific chaperone for YopN. It could facilitate the secretion and the subsequent translocation of YopN. The chain is Chaperone protein YscB (yscB) from Yersinia enterocolitica.